The chain runs to 205 residues: Thymidine kinase (205 aa).

Residues 9–16 (SAMNAGKS) and 87–90 (DESQ) each bind ATP. Glu88 serves as the catalytic Proton acceptor. The Zn(2+) site is built by Cys145, Cys147, Cys182, and His185.

This sequence belongs to the thymidine kinase family. As to quaternary structure, homotetramer.

Its subcellular location is the cytoplasm. It catalyses the reaction thymidine + ATP = dTMP + ADP + H(+). The sequence is that of Thymidine kinase from Salmonella choleraesuis (strain SC-B67).